A 153-amino-acid chain; its full sequence is MATLEQKLQELVADPIDAMGFELVGVECQRAGRFLTVRLYIDKEGGVTVDDCSDVSRQVSAIFDVEDPIADKYNLEVSSPGLDRPLFTLAHYQRFVGREIVVHLRIPMLDRRKWQGELVSVEGDLITLKVDGNLQAFAFGNIQKANLIPVFNF.

It belongs to the RimP family.

The protein resides in the cytoplasm. Its function is as follows. Required for maturation of 30S ribosomal subunits. The sequence is that of Ribosome maturation factor RimP from Glaesserella parasuis serovar 5 (strain SH0165) (Haemophilus parasuis).